The primary structure comprises 936 residues: ABC transporter A family member 5 (936 aa).

Transmembrane regions (helical) follow at residues 34–54 (LIVI…LFDT), 340–360 (ASLI…PVML), 393–413 (FLAI…AIGL), 422–442 (SIQF…AFLV), 454–474 (VAAY…FQFL), 484–501 (WIYI…RGLY), and 527–547 (AMEE…IAAY). The ABC transporter domain occupies 614 to 851 (IVCDNLKKVY…YGGSYVLTMT (238 aa)). Residue 652–659 (GPNGAGKT) coordinates ATP.

The protein belongs to the ABC transporter superfamily. ABCA family. CPR flippase (TC 3.A.1.211) subfamily.

It localises to the membrane. The sequence is that of ABC transporter A family member 5 (ABCA5) from Arabidopsis thaliana (Mouse-ear cress).